A 414-amino-acid chain; its full sequence is Patatin-like protein 1 (414 aa).

The PNPLA domain occupies 20–224 (LAIDGGGIRG…AANNPTMVAM (205 aa)). The GXGXXG motif lies at 24–29 (GGGIRG). Residues 62–66 (GTSTG) carry the GXSXG motif. S64 (nucleophile) is an active-site residue. Catalysis depends on D211, which acts as the Proton acceptor. The DGA/G signature appears at 211–213 (DGG).

This sequence belongs to the patatin family.

In terms of biological role, possesses non-specific lipolytic acyl hydrolase (LAH) activity. Hydrolyzes phospholipids as well as galactolipids. May play a role in disease resistance. This Oryza sativa subsp. indica (Rice) protein is Patatin-like protein 1 (PLP1).